The following is a 48-amino-acid chain: Light-harvesting polypeptide B-885 beta-2 chain (48 aa).

At 1-20 (AEDRKSLSGLTEQEAQEFGT) the chain is on the cytoplasmic side. The helical transmembrane segment at 21–43 (LYTQGVAFVAVIAIVAHALVWAW) threads the bilayer. A bacteriochlorophyll is bound at residue His37. Over 44–48 (RPWLQ) the chain is Periplasmic.

It belongs to the antenna complex beta subunit family. The core complex is formed by different alpha and beta chains, binding bacteriochlorophyll molecules, and arranged most probably in tetrameric structures disposed around the reaction center. The non-pigmented gamma chains may constitute additional components.

The protein localises to the cell inner membrane. In terms of biological role, antenna complexes are light-harvesting systems, which transfer the excitation energy to the reaction centers. The polypeptide is Light-harvesting polypeptide B-885 beta-2 chain (Rhodocyclus tenuis (Rhodospirillum tenue)).